Reading from the N-terminus, the 1344-residue chain is MFLMPTSSELNSGQNFLTQWMTSPSRAGVILNRGFPILEADDKQAATNVSTSFPAKATHFSNSFSISSEEDSFHEEQKLEAGGPYKPWSENPEAPPVFPSVRKEPIASRQDAPGCQEDNNNDLTPHLESEFKEVANKNPLFKKLEQLKEIQQKKQEQLKRQQLEQLQRLMEEQEKLLTMVSAQHAFPGTLLPDDQSQKHRSPGDLTLPPHSYSNPTQENSCASNVLPDEQSNFCRATQDSVLTSKNASDLFYESQYQEAHVKRNDLKEESPAHPSGEGALPRWEKKMGRSQEGKDVNLQKCGDSSEVVNIDERPIKAAVREKQQTFEDYLEEQIQLEERELRQKQLQEAEGPLLAKTKPKQPFLKRGEGLARFTNAKSKFQKGKESKLASTQSPSEDQPGSKVDRQHLQRKTALINKDLCAETPTVKKDSKARPKAGFASLRQKPKVTKTNMRESLSPPGLKVQTGKKRDGQFRHQVKGERNAHASNKENVPACIKPWDAGCKMWSKTQGRERLPLSTGPVGCVVSRSPIRETDRETESSLDFSLQKKLEIWEREKEKENLELDEFLFLERAADEISFSSNSSFVLRILERDQQICDGHRLSSTPVKAVQQREAQQADPRGQSNCSEIPRYGVAHENESECEAMLLSWGSGSPDGLRELSCKRSMKAFQTSTSEIQSQWDARDDGVANSDSSTESEEQHDITIKPSTEVGDRVFSNREDSPQVCDAKGPIRDTGAQEDKWRDADLDLSDKECSSDESVIVESLNNKVLEPLRLPSSQAGSKIDFDDERSWTDLEENPYEHGVIHREEAIYGTPQTQCHSKSEGCVLDKTIKRKIAPVKKGEDFKCDRRISPPPPSDLMVKFFPSLKPKPKLDSHLENESKLNLSQDQPPEFMVCFIGDSVRSQVLREKVTELESEIEKFKAENTSLAKLRIERESALEKLRKEIADFEQQKARELARIEEYRKEETRKLQKERKVFEKYTAAARTFPDKKEREEIQALKQQIADLQEDLKRKETKWSSTQSRLRSQIEMLVKENTDLREEIKVMERFRLDAWKRAEAMENSPKACQYMMATKKDESMNSSFQFQKSHVSSGVQVEKYKKKYLPAQGNLSRRIKSAPPRDLGSSDKGQAALPREPLQQVNFPDLEYKNKEEKEEEIQGEISHPDGKVEKIYKNGRRVVLFPNGTRKEVSADGKSVTVTFFNGDVKQVMPDERVVYYYAAAQTTHTTYPEGLEVLHFSSGQIEKHFPDGRKEITFPDQTIKTLFADGQEESIFPDGTIVRVQRDGNKIIEFNNGQRELHTAQFKRREYPDGTVKTVYANGHQETKYTSGRVRVKDKDGNVLMDTEM.

2 disordered regions span residues 67–123 (SSEE…NNDL) and 187–225 (PGTL…ASNV). Polar residues predominate over residues 211 to 225 (SYSNPTQENSCASNV). Phosphoserine is present on S248. Residues 257 to 300 (QEAHVKRNDLKEESPAHPSGEGALPRWEKKMGRSQEGKDVNLQK) are disordered. Composition is skewed to basic and acidic residues over residues 259 to 271 (AHVK…EESP) and 282 to 297 (RWEK…KDVN). S304 carries the phosphoserine modification. The segment at 307–382 (VVNIDERPIK…FTNAKSKFQK (76 aa)) is alpha/beta-tubulin binding. Disordered stretches follow at residues 347 to 407 (QEAE…DRQH) and 425 to 470 (TVKK…KKRD). Over residues 388–398 (LASTQSPSEDQ) the composition is skewed to polar residues. S528 is subject to Phosphoserine. Phosphoserine; by PLK2 is present on residues S577 and S583. Disordered stretches follow at residues 600-626 (RLSS…SNCS) and 672-735 (TSEI…DTGA). The segment covering 709-720 (VGDRVFSNREDS) has biased composition (basic and acidic residues). Phosphoserine is present on S748. Residues 887–1344 (QPPEFMVCFI…DGNVLMDTEM (458 aa)) form an interaction with STIL region. A disordered region spans residues 1105-1133 (QGNLSRRIKSAPPRDLGSSDKGQAALPRE).

The protein belongs to the TCP10 family. As to quaternary structure, forms homodimers. Associates with microtubules plus ends; binds to beta-tubulin subunits exposed on microtubule outer surface at its distal tip; also associates with microtubule lattice. Associated with the gamma-tubulin complex. Interacts with the head domain of EPB41. Interacts with LYST. Interacts with CEP152 (via C-terminus). Interacts with STIL. Forms a complex with STIL and SASS6. Post-translationally, phosphorylation at Ser-577 and Ser-583 by PLK2 is required for procentriole formation and centriole elongation. Phosphorylation by PLK2 oscillates during the cell cycle: it increases at G1/S transition and decreases during the exit from mitosis. Phosphorylation at Ser-583 is also mediated by PLK4 but is not a critical step in PLK4 function in procentriole assembly.

The protein resides in the cytoplasm. The protein localises to the cytoskeleton. Its subcellular location is the microtubule organizing center. It is found in the centrosome. It localises to the centriole. Plays an important role in cell division and centrosome function by participating in centriole duplication. Inhibits microtubule nucleation from the centrosome. Involved in the regulation of slow processive growth of centriolar microtubules. Acts as microtubule plus-end tracking protein that stabilizes centriolar microtubules and inhibits microtubule polymerization and extension from the distal ends of centrioles. Required for centriole elongation and for STIL-mediated centriole amplification. Required for the recruitment of CEP295 to the proximal end of new-born centrioles at the centriolar microtubule wall during early S phase in a PLK4-dependent manner. May be involved in the control of centriolar-microtubule growth by acting as a regulator of tubulin release. This is Centrosomal P4.1-associated protein (Cpap) from Mus musculus (Mouse).